The sequence spans 185 residues: ATP synthase subunit b 2 (185 aa).

A disordered region spans residues 1 to 25; it reads MAESHGNAHGATAHTEADGGHKAPF. The chain crosses the membrane as a helical span at residues 34 to 56; sequence ASQLVSLTIAFVALYLISSRLAL.

The protein belongs to the ATPase B chain family. As to quaternary structure, F-type ATPases have 2 components, F(1) - the catalytic core - and F(0) - the membrane proton channel. F(1) has five subunits: alpha(3), beta(3), gamma(1), delta(1), epsilon(1). F(0) has three main subunits: a(1), b(2) and c(10-14). The alpha and beta chains form an alternating ring which encloses part of the gamma chain. F(1) is attached to F(0) by a central stalk formed by the gamma and epsilon chains, while a peripheral stalk is formed by the delta and b chains.

The protein resides in the cell inner membrane. F(1)F(0) ATP synthase produces ATP from ADP in the presence of a proton or sodium gradient. F-type ATPases consist of two structural domains, F(1) containing the extramembraneous catalytic core and F(0) containing the membrane proton channel, linked together by a central stalk and a peripheral stalk. During catalysis, ATP synthesis in the catalytic domain of F(1) is coupled via a rotary mechanism of the central stalk subunits to proton translocation. Functionally, component of the F(0) channel, it forms part of the peripheral stalk, linking F(1) to F(0). The b'-subunit is a diverged and duplicated form of b found in plants and photosynthetic bacteria. The chain is ATP synthase subunit b 2 (atpF2) from Nitrobacter winogradskyi (strain ATCC 25391 / DSM 10237 / CIP 104748 / NCIMB 11846 / Nb-255).